The primary structure comprises 281 residues: Cis-2,3-dihydrobiphenyl-2,3-diol dehydrogenase (281 aa).

10-34 contacts NAD(+); that stretch reads ITGGASGLGRALVDRFVAEGARVAV. Substrate is bound at residue Ser-142. The Proton acceptor role is filled by Tyr-155.

Belongs to the short-chain dehydrogenases/reductases (SDR) family. In terms of assembly, homotetramer.

The enzyme catalyses (2R,3S)-3-phenylcyclohexa-3,5-diene-1,2-diol + NAD(+) = biphenyl-2,3-diol + NADH + H(+). It functions in the pathway xenobiotic degradation; biphenyl degradation; 2-hydroxy-2,4-pentadienoate and benzoate from biphenyl: step 2/4. This is Cis-2,3-dihydrobiphenyl-2,3-diol dehydrogenase (bphB) from Comamonas testosteroni (Pseudomonas testosteroni).